The following is a 1167-amino-acid chain: C5a peptidase (1167 aa).

Positions 1 to 31 (MRKKQKLPFDKLAIALMSTSILLNAQSDIKA) are cleaved as a signal peptide. A compositionally biased stretch (polar residues) spans 34 to 52 (VTEDTPVTEQAVETPQPTA). Residues 34 to 73 (VTEDTPVTEQAVETPQPTAVSEEVPSSKETKTPQTPDDAE) are disordered. A Peptidase S8 domain is found at 99–581 (KATIRDLNDP…AGAVDAKKAS (483 aa)). Active-site charge relay system residues include Asp-130, His-193, and Ser-512. The segment at 1029–1133 (EGHSNKPEQD…RDQLPTTNDK (105 aa)) is disordered. A run of 4 repeats spans residues 1034–1050 (KPEQ…KPEA), 1051–1067 (KPEQ…KPEA), 1068–1084 (KPEQ…KPET), and 1085–1101 (KPEK…TPQK). The segment at 1034 to 1101 (KPEQDGSGQT…GQTPGKTPQK (68 aa)) is 4 X 17 AA tandem repeats. Basic and acidic residues-rich tracts occupy residues 1044–1071 (PDKK…KPEQ) and 1078–1090 (PDKK…EKDS). Composition is skewed to polar residues over residues 1092–1106 (GQTP…QPSR) and 1120–1130 (KASTRDQLPTT). The LPXTG sorting signal motif lies at 1127–1131 (LPTTN). A Pentaglycyl murein peptidoglycan amidated threonine modification is found at Thr-1130. Positions 1131–1167 (NDKDTNRLHLLKLVMTTFFFGLVAHIFKTKRQKETKK) are cleaved as a propeptide — removed by sortase.

The protein belongs to the peptidase S8 family. In terms of processing, cleaved by SpeB protease; leading to its degradation. Degradation by SpeB is probably strictly regulated to preserve integrity of C5a peptidase.

It is found in the secreted. The protein resides in the cell wall. It catalyses the reaction The primary cleavage site is at 67-His-|-Lys-68 in human C5a with a minor secondary cleavage site at 58-Ala-|-Ser-59.. Functionally, this virulence factor of S.pyogenes specifically cleaves the human serum chemotaxin C5a at '68-Lys-|-Asp-69' bond near its C-terminus, destroying its ability to serve as a chemoattractant. The protein is C5a peptidase (scpA) of Streptococcus pyogenes.